The chain runs to 365 residues: Geissoschizine synthase (365 aa).

Residue C51 participates in Zn(2+) binding. N52 lines the NADP(+) pocket. Residues H73, E74, C104, C107, C110, C118, and C169 each coordinate Zn(2+). Residues L195, G197, L198, S217, T218, S219, K222, R262, V281, A283, S305, T307, and R352 each contribute to the NADP(+) site.

It belongs to the zinc-containing alcohol dehydrogenase family. Class-III subfamily. Homodimer. The cofactor is Zn(2+). Mainly expressed in roots and, to a lower level, in leaves.

The enzyme catalyses (19E)-geissoschizine + NADP(+) = 4,21-dehydrogeissoschizine + NADPH. It participates in alkaloid biosynthesis; ajmaline biosynthesis. Its function is as follows. Alcohol dehydrogenase involved in the biosynthesis of ajmaline-type monoterpenoid indole alkaloids (MIAs) natural products, important plant-derived pharmaceuticals used in the therapy of heart disorders. Catalyzes iminium reduction on 4,21-dehydrogeissoschizine to produce 19E-geissoschizine, precursor of vomilenine, an intermediate chemical in the biosynthesis of ajmaline. This chain is Geissoschizine synthase, found in Rauvolfia serpentina (Serpentine wood).